Consider the following 254-residue polypeptide: Nickel import ATP-binding protein NikD (254 aa).

Residues 2-241 enclose the ABC transporter domain; it reads PQQIELRNIA…PKHTVTRSLV (240 aa). An ATP-binding site is contributed by 36 to 43; it reads GGSGSGKS.

This sequence belongs to the ABC transporter superfamily. Nickel importer (TC 3.A.1.5.3) family. In terms of assembly, the complex is composed of two ATP-binding proteins (NikD and NikE), two transmembrane proteins (NikB and NikC) and a solute-binding protein (NikA).

It is found in the cell inner membrane. The catalysed reaction is Ni(2+)(out) + ATP + H2O = Ni(2+)(in) + ADP + phosphate + H(+). Part of the ABC transporter complex NikABCDE involved in nickel import. Responsible for energy coupling to the transport system. This is Nickel import ATP-binding protein NikD from Shigella boydii serotype 4 (strain Sb227).